The primary structure comprises 138 residues: Protein FAM136A (138 aa).

Belongs to the FAM136 family.

This is Protein FAM136A (fam136a) from Xenopus tropicalis (Western clawed frog).